The following is a 356-amino-acid chain: Histidinol-phosphate aminotransferase (356 aa).

At lysine 214 the chain carries N6-(pyridoxal phosphate)lysine.

This sequence belongs to the class-II pyridoxal-phosphate-dependent aminotransferase family. Histidinol-phosphate aminotransferase subfamily. Homodimer. Pyridoxal 5'-phosphate serves as cofactor.

The enzyme catalyses L-histidinol phosphate + 2-oxoglutarate = 3-(imidazol-4-yl)-2-oxopropyl phosphate + L-glutamate. The protein operates within amino-acid biosynthesis; L-histidine biosynthesis; L-histidine from 5-phospho-alpha-D-ribose 1-diphosphate: step 7/9. The sequence is that of Histidinol-phosphate aminotransferase (hisC) from Escherichia coli O157:H7.